The primary structure comprises 519 residues: Glycerophosphoinositol permease 1 (519 aa).

Residues 1–32 (MSDLVKSSEVIETTEVPPHNNNNNKRHFKYDS) are disordered. A helical membrane pass occupies residues 39–59 (LAGGVKLKDALMILCAGFALI). N-linked (GlcNAc...) asparagine glycosylation occurs at Asn-93. Helical transmembrane passes span 94–114 (ASLVGTIFGQVIIGLTADYIG), 117–137 (WSIVTATCFLIFGTMMCAASH), and 141–161 (VNGMFWMLTIFRGVTGFGIGA). A glycan (N-linked (GlcNAc...) asparagine) is linked at Asn-175. A run of 8 helical transmembrane segments spans residues 186-206 (ILATNLPLSFGGPFALCIFLI), 216-236 (DAIWRTMFAIGCFWPLSVFYF), 273-293 (VAWFLYDFVTFPNGIFSAGII), 313-333 (LLLGAIALPGVFVGAYVVDIL), 337-357 (YTMMIGFCGYIVFGLIVGCGY), 363-383 (ITGLFIVFYGLMMSCGNFGPG), 404-424 (GISAAIGKVGAVVGTKTFSPI), and 432-452 (WTFIIAAICGLAGVLVTFIFI). The span at 487–500 (EEEDLEGSSEDSSD) shows a compositional bias: acidic residues. The tract at residues 487–519 (EEEDLEGSSEDSSDGEIVKNNTKNDVEKVDALK) is disordered. The N-linked (GlcNAc...) asparagine glycan is linked to Asn-506. The segment covering 508-519 (TKNDVEKVDALK) has biased composition (basic and acidic residues).

The protein belongs to the major facilitator superfamily. Sugar transporter (TC 2.A.1.1) family.

The protein localises to the cell membrane. The enzyme catalyses sn-glycero-3-phospho-1D-myo-inositol(out) = sn-glycero-3-phospho-1D-myo-inositol(in). Functionally, glycerophosphodiester transporter that mediates uptake of glycerophosphoinositol (GroPIns) as a source of inositol and phosphate. Does not possess detectable glycerophosphocholine (GroPCho) transport activity. Although no glycerophosphoinositol transport activity occurs in the absence of GIT1, C.albicans is still able to use glycerophosphoinositol as a phosphate source at pH 7.5, albeit slowly. Thus, a second, GIT1-independent, mechanism must exist for utilizing glycerophosphoinositol as a phosphate source at physiological pH. The expanded ability to utilize GroPIns and GroPCho results from the organism's pathogenic nature and its need to occupy a variety of environments within its host organism. This possibility is buttressed by the fact that GroPIns and GroPCho are present and abundant in human fluids. The sequence is that of Glycerophosphoinositol permease 1 from Candida albicans (strain SC5314 / ATCC MYA-2876) (Yeast).